The sequence spans 179 residues: Large ribosomal subunit protein uL5 (179 aa).

The protein belongs to the universal ribosomal protein uL5 family. In terms of assembly, part of the 50S ribosomal subunit; part of the 5S rRNA/L5/L18/L25 subcomplex. Contacts the 5S rRNA and the P site tRNA. Forms a bridge to the 30S subunit in the 70S ribosome.

Its function is as follows. This is one of the proteins that bind and probably mediate the attachment of the 5S RNA into the large ribosomal subunit, where it forms part of the central protuberance. In the 70S ribosome it contacts protein S13 of the 30S subunit (bridge B1b), connecting the 2 subunits; this bridge is implicated in subunit movement. Contacts the P site tRNA; the 5S rRNA and some of its associated proteins might help stabilize positioning of ribosome-bound tRNAs. This Francisella philomiragia subsp. philomiragia (strain ATCC 25017 / CCUG 19701 / FSC 153 / O#319-036) protein is Large ribosomal subunit protein uL5.